The primary structure comprises 513 residues: MQKFEGYSEKQKSRQHYFVYPLLFQEYIYAFAHDYGLNGSEPVEIFGCNNKKFSSILVKRLIIRMYQQNFLINSVNYPNQDRLFDHRNYFYSEFYSQILSEGFGIVVEIPLSLGQLSCPEEKEIPKFQNLQSIHSIFPFLEDKFLHLHYLSHIEIPYPIHLEILVQLLEYRIQDVPSLHLLRFFLHYYSNWNSLITSMKSIFLLKKENQRLFRFLYNSYVSEYEFFLLFLRKQSSCLRLTSSGTFLERIIFSGKMEHFGVMYPGFFRKTIWFFMDPLMHYVRYQGKAILASKGTLLLKKKWKSYLVNFSQYFFYFWTQPQRIRLNQLTNSCFDFLGYLSSVPINTLLVRNQMLENSFLIDTRMKKFNTTVPATPLVGSLSKAQFCTGSGHPISKPVWTDLSDWDILDRFGRICRNLFHYYSGSSKKQTLYRLKYILRLSCARTLARKHKSTVRTFMQRLGSVFLEEFFTEEEQVFSLMFTKTIHFSFHGSQSERIWYLDIIRINDLVNPLTLN.

This sequence belongs to the intron maturase 2 family. MatK subfamily.

It localises to the plastid. The protein resides in the chloroplast. In terms of biological role, usually encoded in the trnK tRNA gene intron. Probably assists in splicing its own and other chloroplast group II introns. In Saccharum officinarum (Sugarcane), this protein is Maturase K.